Consider the following 453-residue polypeptide: ACT domain-containing protein ACR3 (453 aa).

4 ACT domains span residues 37-112 (LVKV…SASQ), 130-212 (SIEI…KFAR), 266-341 (VINV…RVSE), and 344-423 (SLEL…VPSR).

Expressed in roots, cotyledons, rosette and cauline leaves, sepals, style, and pedicels and tips of young developing siliques.

May bind amino acids. This chain is ACT domain-containing protein ACR3, found in Arabidopsis thaliana (Mouse-ear cress).